A 79-amino-acid polypeptide reads, in one-letter code: Serine protease inhibitor Kazal-type 1 (79 aa).

The first 23 residues, 1–23, serve as a signal peptide directing secretion; that stretch reads MKVASIFLLTALVLMSLSGNSGA. The Kazal-like domain maps to 26–79; that stretch reads LGREAKCTNEVNGCPRIYNPVCGTDGVTYSNECLLCMENKERQTPVLIQKSGPC. 3 disulfide bridges follow: Cys-32/Cys-61, Cys-39/Cys-58, and Cys-47/Cys-79.

The protein resides in the secreted. Its function is as follows. Serine protease inhibitor which exhibits anti-trypsin activity. In the pancreas, protects against trypsin-catalyzed premature activation of zymogens. In terms of biological role, in the male reproductive tract, binds to sperm heads where it modulates sperm capacitance by inhibiting calcium uptake and nitrogen oxide (NO) production. The sequence is that of Serine protease inhibitor Kazal-type 1 (SPINK1) from Bos taurus (Bovine).